The primary structure comprises 198 residues: Probable host range protein 2-3 (198 aa).

Residues Gly-153–Glu-198 form a disordered region. Composition is skewed to acidic residues over residues Gly-156–Asp-171 and Leu-178–Glu-198.

It belongs to the poxviridae C7 protein family.

In terms of biological role, plays a role for multiplication of the virus in different cell types. The protein is Probable host range protein 2-3 of Rabbit fibroma virus (strain Kasza) (RFV).